A 369-amino-acid chain; its full sequence is Transcription factor GTE6 (369 aa).

In terms of domain architecture, Bromo spans 89–198 (KRMQDLMRQF…EKFEEKWAHF (110 aa)). Positions 201–263 (KVQEEEKIRE…VERCRKITIE (63 aa)) form a coiled coil. The NET domain maps to 250 to 331 (MRKVVERCRK…DALDNAMKKK (82 aa)). The span at 329–348 (KKKKEEETKTRELSGAQKKE) shows a compositional bias: basic and acidic residues. The tract at residues 329 to 369 (KKKKEEETKTRELSGAQKKEVSKKRNATTKLAERKTKRSRI) is disordered. The short motif at 351–368 (KKRNATTKLAERKTKRSR) is the Bipartite nuclear localization signal element.

As to expression, abundantly expressed in flowers. Weakly expressed in roots, leaves and siliques; and undetectable in 5-day-old seedlings. In the basal rosette leaves of 21-day-old plants, it is more abundant in leaves 6 and 7, which possess narrow elliptical laminae, than in leaves 1-4, which have round laminae, suggesting a possible correlation between its expression and the formation of elliptical leaf laminae in mature leaves.

It is found in the nucleus. Regulates differences in leaf patterning between juvenile and mature leaves by controlling differences in the development of primordia produced during juvenile and mature phases. Acts by activating transcription of the myb-domain protein AS1, a gene involved in leaf-axis specification. Associates with the promoter and the start of the transcribed region of AS1 and up-regulates expression of AS1 through acetylation of histones H3 and H4. This Arabidopsis thaliana (Mouse-ear cress) protein is Transcription factor GTE6 (GTE6).